Reading from the N-terminus, the 118-residue chain is Large ribosomal subunit protein bL20 (118 aa).

This sequence belongs to the bacterial ribosomal protein bL20 family.

Functionally, binds directly to 23S ribosomal RNA and is necessary for the in vitro assembly process of the 50S ribosomal subunit. It is not involved in the protein synthesizing functions of that subunit. In Shigella dysenteriae serotype 1 (strain Sd197), this protein is Large ribosomal subunit protein bL20.